The chain runs to 145 residues: uncharacterized protein (145 aa).

Residues 104 to 124 (IEVIILSHHFVIGFSFLLGLL) traverse the membrane as a helical segment.

Its subcellular location is the membrane. This is an uncharacterized protein from Saccharomyces cerevisiae (strain ATCC 204508 / S288c) (Baker's yeast).